A 376-amino-acid chain; its full sequence is UDP-N-acetylglucosamine 2-epimerase (376 aa).

Substrate-binding positions include R10, K15, D95, E117, H213, Q271, F276, 290 to 292 (SGG), E296, and R313.

Belongs to the UDP-N-acetylglucosamine 2-epimerase family. Homodimer.

The protein resides in the cytoplasm. The enzyme catalyses UDP-N-acetyl-alpha-D-glucosamine = UDP-N-acetyl-alpha-D-mannosamine. The protein operates within bacterial outer membrane biogenesis; enterobacterial common antigen biosynthesis. Allosterically activated by its substrate, UDP-GlcNAc. In terms of biological role, catalyzes the reversible epimerization at C-2 of UDP-N-acetylglucosamine (UDP-GlcNAc) and thereby provides bacteria with UDP-N-acetylmannosamine (UDP-ManNAc), the activated donor of ManNAc residues. Also involved in bacteriophage N4 adsorption. The sequence is that of UDP-N-acetylglucosamine 2-epimerase from Escherichia coli (strain K12).